A 400-amino-acid polypeptide reads, in one-letter code: Nicotinate phosphoribosyltransferase (400 aa).

His220 bears the Phosphohistidine; by autocatalysis mark.

Belongs to the NAPRTase family. In terms of processing, transiently phosphorylated on a His residue during the reaction cycle. Phosphorylation strongly increases the affinity for substrates and increases the rate of nicotinate D-ribonucleotide production. Dephosphorylation regenerates the low-affinity form of the enzyme, leading to product release.

The enzyme catalyses nicotinate + 5-phospho-alpha-D-ribose 1-diphosphate + ATP + H2O = nicotinate beta-D-ribonucleotide + ADP + phosphate + diphosphate. It participates in cofactor biosynthesis; NAD(+) biosynthesis; nicotinate D-ribonucleotide from nicotinate: step 1/1. In terms of biological role, catalyzes the synthesis of beta-nicotinate D-ribonucleotide from nicotinate and 5-phospho-D-ribose 1-phosphate at the expense of ATP. This is Nicotinate phosphoribosyltransferase from Escherichia coli O45:K1 (strain S88 / ExPEC).